Consider the following 405-residue polypeptide: Serine-type anaerobic sulfatase-maturating enzyme (405 aa).

The region spanning 18-249 is the Radical SAM core domain; the sequence is PRSPVPFHIL…QWRKRCDRGR (232 aa). [4Fe-4S] cluster is bound by residues Cys-35 and Cys-39. Tyr-41 is a binding site for S-adenosyl-L-methionine. [4Fe-4S] cluster is bound at residue Cys-42. Gly-84, Ser-140, and Arg-152 together coordinate S-adenosyl-L-methionine. [4Fe-4S] cluster contacts are provided by Cys-270, Cys-276, and Cys-291. Asp-292 serves as the catalytic Proton acceptor. Residues Cys-331, Cys-334, Cys-340, Cys-344, and Cys-357 each coordinate [4Fe-4S] cluster.

It belongs to the radical SAM superfamily. Anaerobic sulfatase-maturating enzyme family. In terms of assembly, monomer. Interacts with AtsA prior to its export to the periplasm. [4Fe-4S] cluster is required as a cofactor.

It localises to the cytoplasm. It catalyses the reaction L-seryl-[sulfatase] + S-adenosyl-L-methionine = 3-oxo-L-alanyl-[sulfatase] + 5'-deoxyadenosine + L-methionine + H(+). Its pathway is protein modification; sulfatase oxidation. Functionally, involved in 'Ser-type' sulfatase maturation under anaerobic conditions. Catalyzes the post-translational modification of serine ('Ser-72' in the arylsulfatase AtsA) into 3-oxoalanine (also known as C(alpha)-formylglycine (FGly)), by a free radical chemical mechanism initiated via the reductive cleavage of S-adenosyl-L-methionine (SAM). This Klebsiella aerogenes (Enterobacter aerogenes) protein is Serine-type anaerobic sulfatase-maturating enzyme.